Consider the following 949-residue polypeptide: Translation initiation factor IF-2 (949 aa).

Disordered stretches follow at residues 54–183 (FLKP…EAAP), 217–288 (LPAA…EVAL), and 305–357 (EVVA…EMQA). Composition is skewed to basic and acidic residues over residues 67 to 92 (DQEK…ERHI) and 101 to 164 (IEAK…EEAA). Composition is skewed to low complexity over residues 165–183 (RAAA…EAAP) and 217–228 (LPAAAPAAPSAP). Basic and acidic residues-rich tracts occupy residues 235–288 (PVEE…EVAL) and 330–339 (KYQDNEDRLQ). One can recognise a tr-type G domain in the interval 445 to 619 (TRPPVITVMG…EMLNLQSNPT (175 aa)). A G1 region spans residues 454 to 461 (GHVDHGKT). 454–461 (GHVDHGKT) serves as a coordination point for GTP. The segment at 479–483 (GITQH) is G2. Residues 501 to 504 (DTPG) are G3. Residues 501 to 505 (DTPGH) and 555 to 558 (NKID) contribute to the GTP site. The interval 555–558 (NKID) is G4. The interval 591-593 (SAK) is G5.

The protein belongs to the TRAFAC class translation factor GTPase superfamily. Classic translation factor GTPase family. IF-2 subfamily.

The protein resides in the cytoplasm. Its function is as follows. One of the essential components for the initiation of protein synthesis. Protects formylmethionyl-tRNA from spontaneous hydrolysis and promotes its binding to the 30S ribosomal subunits. Also involved in the hydrolysis of GTP during the formation of the 70S ribosomal complex. In Magnetococcus marinus (strain ATCC BAA-1437 / JCM 17883 / MC-1), this protein is Translation initiation factor IF-2.